The primary structure comprises 159 residues: Protein Smg homolog (159 aa).

This sequence belongs to the Smg family.

This is Protein Smg homolog from Nitrosococcus oceani (strain ATCC 19707 / BCRC 17464 / JCM 30415 / NCIMB 11848 / C-107).